The following is a 535-amino-acid chain: Flavin-containing monooxygenase 1 (535 aa).

Ala-2 is modified (N-acetylalanine). Over 2 to 513 the chain is Lumenal; that stretch reads AKRVAIVGAG…TRIVQESSSP (512 aa). FAD-binding positions include 9–13, Glu-32, 40–41, and 61–62; these read GAGVS, LW, and NS. NADP(+) is bound by residues 60 to 61 and 195 to 198; these read SN and SGTD. Residues 514 to 534 traverse the membrane as a helical segment; the sequence is FESLLKLFAVLALLVSVFLIF. Leu-535 is a topological domain (cytoplasmic).

This sequence belongs to the FMO family. Requires FAD as cofactor. Liver.

Its subcellular location is the endoplasmic reticulum membrane. The catalysed reaction is hypotaurine + NADPH + O2 + H(+) = taurine + NADP(+) + H2O. It catalyses the reaction hypotaurine + NADH + O2 + H(+) = taurine + NAD(+) + H2O. The enzyme catalyses trimethylamine + NADPH + O2 = trimethylamine N-oxide + NADP(+) + H2O. It carries out the reaction N,N-dimethylaniline + NADPH + O2 + H(+) = N,N-dimethylaniline N-oxide + NADP(+) + H2O. Its function is as follows. Broad spectrum monooxygenase that catalyzes the oxygenation of a wide variety of nitrogen- and sulfur-containing compounds including xenobiotics. Catalyzes the S-oxygenation of hypotaurine to produce taurine, an organic osmolyte involved in cell volume regulation as well as a variety of cytoprotective and developmental processes. In vitro, catalyzes the N-oxygenation of trimethylamine (TMA) to produce trimethylamine N-oxide (TMAO) and could therefore participate to the detoxification of this compound that is generated by the action of gut microbiota from dietary precursors such as choline, choline containing compounds, betaine or L-carnitine. This is Flavin-containing monooxygenase 1 (FMO1) from Oryctolagus cuniculus (Rabbit).